A 140-amino-acid chain; its full sequence is Putative cell wall protein (140 aa).

The N-terminal stretch at 1-21 is a signal peptide; that stretch reads MASSLITSAVIVVVLSLVLGS. Residues 85-98 are compositionally biased toward gly residues; it reads TGGGIPSYNGGQGA. Positions 85–140 are disordered; sequence TGGGIPSYNGGQGAGPHTQLPGGDDTLVPNPGFEAPTPTIGAGTGSNGQVPPVPLP.

Inflorescence.

Its subcellular location is the secreted. It is found in the cell wall. The protein is Putative cell wall protein of Arabidopsis thaliana (Mouse-ear cress).